The sequence spans 181 residues: Inner membrane-spanning protein YciB (181 aa).

The next 5 helical transmembrane spans lie at 8-28 (FPII…ATAA), 53-73 (ITLI…NAIF), 76-96 (WKPT…HFFG), 121-141 (LSWA…VYNF), and 149-169 (FKLF…AFYI).

It belongs to the YciB family.

The protein resides in the cell inner membrane. In terms of biological role, plays a role in cell envelope biogenesis, maintenance of cell envelope integrity and membrane homeostasis. The sequence is that of Inner membrane-spanning protein YciB from Coxiella burnetii (strain RSA 331 / Henzerling II).